Consider the following 143-residue polypeptide: Small ribosomal subunit protein uS11c (143 aa).

This sequence belongs to the universal ribosomal protein uS11 family. As to quaternary structure, part of the 30S ribosomal subunit.

The protein localises to the plastid. It localises to the chloroplast. The protein is Small ribosomal subunit protein uS11c of Zea mays (Maize).